We begin with the raw amino-acid sequence, 193 residues long: Probable thymidylate kinase (193 aa).

7–14 (GIDGAGKT) contacts ATP.

It belongs to the thymidylate kinase family.

It catalyses the reaction dTMP + ATP = dTDP + ADP. The protein is Probable thymidylate kinase (tmk) of Thermoplasma acidophilum (strain ATCC 25905 / DSM 1728 / JCM 9062 / NBRC 15155 / AMRC-C165).